The chain runs to 434 residues: Pancreatic lipase-related protein 2 (434 aa).

Cysteines 4 and 10 form a disulfide. Positions 76-88 are required for galactolipase activity; sequence IHGFTDSGENSWL. Cys-92 and Cys-103 are disulfide-bonded. Catalysis depends on Ser-154, which acts as the Nucleophile. Asp-178 functions as the Charge relay system in the catalytic mechanism. Ca(2+) is bound by residues Glu-189, Arg-192, Asp-194, and Asp-197. An intrachain disulfide couples Cys-239 to Cys-245. The tract at residues 240-244 is required for galactolipase activity; sequence KTGIS. Residue His-247 is the Charge relay system of the active site. 2 disulfide bridges follow: Cys-269–Cys-280 and Cys-283–Cys-288. Asn-318 carries an N-linked (GlcNAc...) asparagine glycan. The PLAT domain occupies 322 to 434; it reads WRYKVTVTLS…ENVEQTLSPC (113 aa). Residues Cys-418 and Cys-434 are joined by a disulfide bond.

This sequence belongs to the AB hydrolase superfamily. Lipase family. As to expression, pancreas.

It localises to the secreted. Its subcellular location is the zymogen granule membrane. The protein resides in the cell projection. The protein localises to the neuron projection. The enzyme catalyses a triacylglycerol + H2O = a diacylglycerol + a fatty acid + H(+). It carries out the reaction a 1,2-diacyl-3-O-(beta-D-galactosyl)-sn-glycerol + 2 H2O = 3-beta-D-galactosyl-sn-glycerol + 2 a fatty acid + 2 H(+). It catalyses the reaction 1,2,3-tri-(9Z-octadecenoyl)-glycerol + H2O = di-(9Z)-octadecenoylglycerol + (9Z)-octadecenoate + H(+). The catalysed reaction is di-(9Z)-octadecenoylglycerol + H2O = (9Z-octadecenoyl)-glycerol + (9Z)-octadecenoate + H(+). The enzyme catalyses (9Z-octadecenoyl)-glycerol + H2O = glycerol + (9Z)-octadecenoate + H(+). It carries out the reaction 1-(9Z-octadecenoyl)-glycerol + H2O = glycerol + (9Z)-octadecenoate + H(+). It catalyses the reaction 1,2,3-tripropanoylglycerol + H2O = dipropanoylglycerol + propanoate + H(+). The catalysed reaction is 1,2,3-tributanoylglycerol + H2O = dibutanoylglycerol + butanoate + H(+). The enzyme catalyses 1,2,3-trioctanoylglycerol + H2O = dioctanoylglycerol + octanoate + H(+). It carries out the reaction 1,2-didecanoylglycerol + H2O = decanoylglycerol + decanoate + H(+). It catalyses the reaction long chain 1,2-diacyl-3-O-beta-D-galactosyl-sn-glycerol + H2O = long chain acyl-3-O-beta-D-galactosyl-sn-glycerol + a fatty acid + H(+). The catalysed reaction is 1,2-dioctanoyl-3-O-beta-D-galactosyl-sn-glycerol + H2O = octanoyl-3-(beta-D-galactosyl)-sn-glycerol + octanoate + H(+). The enzyme catalyses 1,2-didodecanoyl-3-beta-D-galactosyl-sn-glycerol + H2O = dodecanoyl-3-beta-D-galactosyl-sn-glycerol + dodecanoate + H(+). It carries out the reaction 1-beta-D-galactosyl-2,3-didodecanoyl-sn-glycerol + H2O = 1-beta-D-galactosyl-dodecanoyl-sn-glycerol + dodecanoate + H(+). It catalyses the reaction a 1,2-diacyl-3-O-[alpha-D-galactosyl-(1-&gt;6)-beta-D-galactosyl]-sn-glycerol + H2O = acyl-3-O-[alpha-D-galactosyl-(1-&gt;6)-beta-D-galactosyl]-sn-glycerol + a fatty acid + H(+). The catalysed reaction is long chain 1,2-diacyl-3-O-[alpha-D-galactosyl-(1-&gt;6)-beta-D-galactosyl]-sn-glycerol + H2O = long chain acyl-3-O-[alpha-D-galactosyl-(1-&gt;6)-beta-D-galactosyl]-sn-glycerol + a fatty acid + H(+). The enzyme catalyses 1,2-dioctanoyl-3-O-[alpha-D-galactosyl-(1-&gt;6)-beta-D-galactosyl]-sn-glycerol + H2O = octanoyl-3-O-[alpha-D-galactosyl-(1-&gt;6)-beta-D-galactosyl]-sn-glycerol + octanoate + H(+). It carries out the reaction 1,2-didodecanoyl-3-O-[alpha-D-galactosyl-(1-&gt;6)-beta-D-galactosyl]-sn-glycerol + H2O = dodecanoyl-3-O-[alpha-D-galactosyl-(1-&gt;6)-beta-D-galactosyl]-sn-glycerol + dodecanoate + H(+). It catalyses the reaction a 1,2-diacyl-sn-glycero-3-phosphocholine + H2O = a monoacyl-sn-glycero-3-phosphocholine + a fatty acid + H(+). Its pathway is glycerolipid metabolism; triacylglycerol degradation. The protein operates within glycolipid metabolism. Its activity is regulated as follows. CLPS stimulates triacylglycerol lipase activity. Not inhibited by bile salts. Functionally, lipase that primarily hydrolyzes triglycerides and galactosylglycerides. In neonates, may play a major role in pancreatic digestion of dietary fats such as milk fat globules enriched in long-chain triglycerides. Hydrolyzes short-, medium- and long-chain fatty acyls in triglycerides without apparent positional specificity. Can completely deacylate triacylglycerols. When the liver matures and bile salt synthesis increases, likely functions mainly as a galactolipase and monoacylglycerol lipase. Hydrolyzes monogalactosyldiglycerols (MGDG) and digalactosyldiacylglycerols (DGDG) present in a plant-based diet, releasing long-chain polyunsaturated fatty acids. Hydrolyzes medium- and long-chain fatty acyls in galactolipids. May act together with LIPF to hydrolyze partially digested triglycerides. Hydrolyzes long-chain monoglycerides with high efficiency. In cytotoxic T cells, contributes to perforin-dependent cell lysis, but is unlikely to mediate direct cytotoxicity. Also has low phospholipase activity. In neurons, required for the localization of the phospholipid 1-oleoyl-2-palmitoyl-PC (OPPC) to neurite tips through acyl chain remodeling of membrane phospholipids. The resulting OPPC-rich lipid membrane domain recruits the t-SNARE protein STX4 by selectively interacting with the STX4 transmembrane domain and this promotes surface expression of the dopamine transporter SLC6A3/DAT at neurite tips by facilitating fusion of SLC6A3-containing transport vesicles with the plasma membrane. The protein is Pancreatic lipase-related protein 2 of Cavia porcellus (Guinea pig).